Reading from the N-terminus, the 395-residue chain is Phosphoribulokinase, chloroplastic (395 aa).

The N-terminal 46 residues, 1 to 46 (MAVSTIYSTQALNSTHFLTSSSSSKQVFLYRRQPQTNRRFNTLITC), are a transit peptide targeting the chloroplast. A disulfide bond links Cys61 and Cys100.

It belongs to the phosphoribulokinase family.

The protein resides in the plastid. Its subcellular location is the chloroplast. It catalyses the reaction D-ribulose 5-phosphate + ATP = D-ribulose 1,5-bisphosphate + ADP + H(+). The protein operates within carbohydrate biosynthesis; Calvin cycle. With respect to regulation, light regulated via thioredoxin by reversible oxidation/reduction of sulfhydryl/disulfide groups. This chain is Phosphoribulokinase, chloroplastic, found in Arabidopsis thaliana (Mouse-ear cress).